A 495-amino-acid polypeptide reads, in one-letter code: uncharacterized protein (495 aa).

A run of 12 helical transmembrane segments spans residues Ile-43–Ile-63, Thr-75–Phe-95, Pro-106–Val-126, Leu-128–Ile-148, Ile-168–Ala-188, Trp-196–Leu-216, Pro-284–Phe-304, Gly-323–Leu-343, Pro-366–Val-386, Val-390–Phe-410, Ala-426–Phe-446, and Ser-461–Gly-481.

It belongs to the major facilitator superfamily. CAR1 family.

Its subcellular location is the membrane. This is an uncharacterized protein from Schizosaccharomyces pombe (strain 972 / ATCC 24843) (Fission yeast).